Here is a 738-residue protein sequence, read N- to C-terminus: Isocitrate dehydrogenase [NADP] (738 aa).

Asn83 and Ser85 together coordinate NADP(+). The D-threo-isocitrate site is built by Ser130, Asn133, Arg137, Arg143, and Lys253. Asn133 lines the NADP(+) pocket. Position 346 (Asp346) interacts with Mg(2+). Residues Tyr416 and Arg543 each coordinate D-threo-isocitrate. 2 residues coordinate Mg(2+): Asp544 and Asp548. NADP(+) is bound by residues Gly580, His585, Arg596, Asp598, and Arg645.

Belongs to the monomeric-type IDH family. As to quaternary structure, monomer. Mg(2+) is required as a cofactor. Mn(2+) serves as cofactor.

Its subcellular location is the cytoplasm. It carries out the reaction D-threo-isocitrate + NADP(+) = 2-oxoglutarate + CO2 + NADPH. Its activity is regulated as follows. Weakly inhibited by oxaloacetate, 2-oxoglutarate and citrate. Severely inhibited by oxaloacetate plus glyoxylate. In terms of biological role, catalyzes the oxidative decarboxylation of isocitrate to 2-oxoglutarate and carbon dioxide with the concomitant reduction of NADP(+). Cannot use NAD(+). This chain is Isocitrate dehydrogenase [NADP], found in Corynebacterium glutamicum (strain ATCC 13032 / DSM 20300 / JCM 1318 / BCRC 11384 / CCUG 27702 / LMG 3730 / NBRC 12168 / NCIMB 10025 / NRRL B-2784 / 534).